Consider the following 332-residue polypeptide: MASKDIVHPQPERRHGSETHEFTMPLLSPTLTPSHIPSQTPQIPPEVPAEVRDRLPLPETLPVVKCMARARIPTTQGPEIFLHLYENNVDNKEHLAIVFGEDVRSKTLYQKRPNETQQDRMTRGAYVGRLFPGRTEADYDSESNLRLNFDENGQLIRDPSTTCSGEPILARIHSECYTGETAWSARCDCGEQFDEAGRLMGEAGHGCIVYLRQEGRGIGLGEKLKAYNLQDLGADTVQANLMLRHPADARSFSLATAILLDLGLNEIKLLTNNPDKIAAVEGRNREVKVVERVPMVPLAWRSENGIKSKEIEGYLSAKIERMGHLLEKPLKI.

Disordered regions lie at residues 1 to 20 (MASKDIVHPQPERRHGSETH) and 25 to 46 (PLLSPTLTPSHIPSQTPQIPPE). The span at 29–41 (PTLTPSHIPSQTP) shows a compositional bias: polar residues. 171 to 175 (RIHSE) is a binding site for GTP. Zn(2+) contacts are provided by C176, C187, and C189. Residues Q192, 214-216 (EGR), and T236 contribute to the GTP site. Residue D248 is the Proton acceptor of the active site. R250 acts as the Nucleophile in catalysis. GTP-binding residues include T271 and K276.

Belongs to the GTP cyclohydrolase II family. It depends on Zn(2+) as a cofactor.

It carries out the reaction GTP + 4 H2O = 2,5-diamino-6-hydroxy-4-(5-phosphoribosylamino)-pyrimidine + formate + 2 phosphate + 3 H(+). Its pathway is cofactor biosynthesis; riboflavin biosynthesis; 5-amino-6-(D-ribitylamino)uracil from GTP: step 1/4. In terms of biological role, catalyzes the conversion of GTP to 2,5-diamino-6-ribosylamino-4(3H)-pyrimidinone 5'-phosphate (DARP), formate and pyrophosphate. The chain is GTP cyclohydrolase-2 (RIB1) from Meyerozyma guilliermondii (strain ATCC 6260 / CBS 566 / DSM 6381 / JCM 1539 / NBRC 10279 / NRRL Y-324) (Yeast).